The sequence spans 131 residues: Small ribosomal subunit protein bS6 (131 aa).

The interval 98–131 (EASPMVKAKDERRERREDFANETADDSEAGDSEE) is disordered. Over residues 104–116 (KAKDERRERREDF) the composition is skewed to basic and acidic residues. The segment covering 120-131 (TADDSEAGDSEE) has biased composition (acidic residues).

The protein belongs to the bacterial ribosomal protein bS6 family.

Binds together with bS18 to 16S ribosomal RNA. The sequence is that of Small ribosomal subunit protein bS6 from Klebsiella pneumoniae subsp. pneumoniae (strain ATCC 700721 / MGH 78578).